Reading from the N-terminus, the 1567-residue chain is MASQPPQPPSGQPDTQYEEYQSEVITETTNRPTPAADVYEITPTNDVMDDRYEHEHDDYESGAMYETVRTWSPQSRPELVRIASVFSRIDSHPDVAPTTEDGGQLNRRDTLAGVKIGDPVLDPTKPEFDFYKWARMFTHVMEKEGIKRNRTGVMFRNLTVLGSGSAVQYQDTFLSPFAAPFRPGELCGKGRNPEKVILHDFNGAIREGELLMVLGRPGSGCSTFLKAICGELHGLQKKKESIIHYNGVSQHTFKKELRGEAVYSAEDEHHFPHLTVGQTLEFAAAARTPSKRVLGLSRKDFSTHLARVMMSVFGLSHTYNTKVGDDYVRGVSGGERKRVSIAEIALSGAPICCWDNSTRGLDSATALEFTKALKIGSQVGGITQCLAIYQASQAIYDIFDKVIVLYEGRQIFFGPTRIAKQYFEEMGWYCPPRQTTADFLTSVTNPKERIAKEGYENRVPRTAVEFERYWKQSQNNKLLLADMDRFEAEYPLEEGHLEKLRETHGQAQAKHTASKSPYRISVPMQVKLCTVRAYQRLWGDKSSTIATNISQIMMALIIGSLFFDTPQTTDGFFAKGSVIFFAILLNGLMSITEINGLCKATDPIVPNAQRPIVVKHVNFAFYHAYSEALAGIVADIPIKFLLALVFNIIIYFLGGLERSAAKFFIFFLFTFITILTMSAIFRTLAAATKTIPQALALAGVMILALVIYTGFTLQPSYMHPWFKWILYINPIAYAYEALLVNEVHGNRYRCATPIPPYGSGTNFACAVAGAVPGEMSVSGDAWVESSYDYSYAHIWRNLGILLGFLAFFYFVYLVVSELNLSSASSAEFLVFRRGHLPKNFQGSKDEEAAAGGVMHPNDPARLPPTNTNGAAGETAPGGSTVAVIPPQKDIFTWRNVTYDITIKGEPRRLLDNISGWVRPGTLTALMGVSGAGKTTLLDALAQRTTMGVITGDMLVNGRPLDSSFQRKTGYVQQQDLHLETTTVREALRFSADLRQPKSVSRKEKYEYVEDVIKMLSMEDFSEAVVGNPGEGLNVEQRKLLTIGVELAAKPQLLLFLDEPTSGLDSQSSWSIVTFLRKLADNGQAVLSTIHQPSGILFEQFDRLLFLAKGGRTVYFGDIGKNSETLLNYFETHGAEPCGPSENPAEYMLNIVGAGPSGKSKIDWPAVWKESEESRHVQQELDRIQSETSKRNEGHGQSAEKEPGEFAMPFTSQLYCVTTRVFQQYWRTPSYIWGKLLLGLTSALFIGFSFFLQNSSMAGLQNSLFSIFMLTTIFSSLVQQIMPRFVTQRDLFEVRERPSRAYSWKVFLLANIIVEIPYQILLGIIAWASLFYPTFGAHLSSERQGILLLYCVQFFIFASTFAQMIIAGLPDAETAGGIATTMFGLMVTFNGVLQKPNALPGFWRFMWRVSPITYTVGGLAATSLHSREVKCAQNELAIFDPPSGATCAQYLQKLVEAGAPGKLYNPMSTSQCQYCPLSSGDQFLGGSEIHWSDRWRNFGIGWAYIVFNIFATVALYYLIRVRKSSGRPNRIISVITYHLSQFGTYCRAFITGRKEKCPRKREQIGKIY.

Residues 1–11 (MASQPPQPPSG) show a composition bias toward pro residues. Residues 1–37 (MASQPPQPPSGQPDTQYEEYQSEVITETTNRPTPAAD) are disordered. The segment covering 22-32 (SEVITETTNRP) has biased composition (polar residues). Asparagine 149, asparagine 157, and asparagine 356 each carry an N-linked (GlcNAc...) asparagine glycan. The ABC transporter 1 domain maps to 167-432 (VQYQDTFLSP…FEEMGWYCPP (266 aa)). A run of 6 helical transmembrane segments spans residues 543-563 (STIATNISQIMMALIIGSLFF), 571-591 (GFFAKGSVIFFAILLNGLMSI), 636-656 (IPIKFLLALVFNIIIYFLGGL), 661-681 (AKFFIFFLFTFITILTMSAIF), 691-711 (IPQALALAGVMILALVIYTGF), and 798-818 (LGILLGFLAFFYFVYLVVSEL). N-linked (GlcNAc...) asparagine glycans are attached at residues asparagine 819, asparagine 895, and asparagine 912. In terms of domain architecture, ABC transporter 2 spans 891 to 1134 (FTWRNVTYDI…LLNYFETHGA (244 aa)). 927–934 (GVSGAGKT) provides a ligand contact to ATP. Residues 1172–1202 (ESRHVQQELDRIQSETSKRNEGHGQSAEKEP) form a disordered region. The chain crosses the membrane as a helical span at residues 1231 to 1251 (IWGKLLLGLTSALFIGFSFFL). A glycan (N-linked (GlcNAc...) asparagine) is linked at asparagine 1253. 5 helical membrane passes run 1257 to 1277 (AGLQNSLFSIFMLTTIFSSLV), 1305 to 1325 (VFLLANIIVEIPYQILLGIIA), 1345 to 1365 (ILLLYCVQFFIFASTFAQMII), 1372 to 1392 (ETAGGIATTMFGLMVTFNGVL), and 1498 to 1518 (GIGWAYIVFNIFATVALYYLI).

This sequence belongs to the ABC transporter superfamily. ABCG family. PDR (TC 3.A.1.205) subfamily.

It localises to the cell membrane. The enzyme catalyses voriconazole(in) + ATP + H2O = voriconazole(out) + ADP + phosphate + H(+). It carries out the reaction fluconazole(in) + ATP + H2O = fluconazole(out) + ADP + phosphate + H(+). It catalyses the reaction (R)-miconazole(in) + ATP + H2O = (R)-miconazole(out) + ADP + phosphate + H(+). The catalysed reaction is (S)-miconazole(in) + ATP + H2O = (S)-miconazole(out) + ADP + phosphate + H(+). In terms of biological role, pleiotropic ABC efflux transporter that may be involved in the modulation susceptibility to a wide range of unrelated cytotoxic compounds. The chain is ABC multidrug transporter MDR1 from Trichophyton tonsurans (strain CBS 112818) (Scalp ringworm fungus).